A 500-amino-acid chain; its full sequence is MSLASTQSIAEIRARNKELIQEVLKVYPEKTAKRRAKHLNVHQAGKSDCGVKSNIKSIPGVMTIRGCAYAGSKGVVWGPIKDMVHISHGPVGCGQYSWGSRRNYYVGTTGIDSFVTLQFTFDFREKDIVFGGDKKLVKILDEIQELFPLNNGITIQSECPIGLIGDDIEAVSRAKSKEYGGKTIVPVRCEGFRGVSQSLGHHIANDAVRDWIFDQVEADGKPKVEPTPYDVAIIGDYNIGGDAWSSRILLEEMGLRVIAQWSGDGSLAELEANVEGKLNILHCYRSMNYISRHMEEKFGIPWCEYNFFGPSKIAESLRRIAGYFDDKIKEGAERVIEKYQPLVNAVIAKYRPRLEGKTVMLYVGGLRSRHVIGAYEDLGMEVIGTGYEFGHNDDYQRTAQHYVKDGTLIHDDVNGYEFERFVEKLQPDLVGSGIKEKYVFQKMGGPFRQMHSWDYSGPYHGYDGFAIFARDMDMAINSPVWKKTKAPWKEASRAKLLAAE.

[8Fe-7S] cluster-binding residues include C67, C93, and C159. [7Fe-Mo-9S-C-homocitryl] cluster is bound by residues C283 and H451.

The protein belongs to the NifD/NifK/NifE/NifN family. As to quaternary structure, tetramer of two alpha and two beta chains. Forms complex with the iron protein (nitrogenase component 2). [8Fe-7S] cluster is required as a cofactor. [7Fe-Mo-9S-C-homocitryl] cluster serves as cofactor.

It carries out the reaction N2 + 8 reduced [2Fe-2S]-[ferredoxin] + 16 ATP + 16 H2O = H2 + 8 oxidized [2Fe-2S]-[ferredoxin] + 2 NH4(+) + 16 ADP + 16 phosphate + 6 H(+). Functionally, this molybdenum-iron protein is part of the nitrogenase complex that catalyzes the key enzymatic reactions in nitrogen fixation. This is Nitrogenase molybdenum-iron protein alpha chain (nifD) from Rhizobium sp. cowpea (strain IRc78).